A 431-amino-acid polypeptide reads, in one-letter code: Glucose-1-phosphate adenylyltransferase (431 aa).

Residue K39 participates in beta-D-fructose 1,6-bisphosphate binding. AMP contacts are provided by R40, H46, and R52. Y114 contacts alpha-D-glucose 1-phosphate. R130 is a binding site for AMP. Residues G179, 194–195, and S212 each bind alpha-D-glucose 1-phosphate; that span reads EK. AMP is bound by residues E370 and R386. Beta-D-fructose 1,6-bisphosphate-binding positions include 419–423 and 429–431; these read REMLR and QER.

This sequence belongs to the bacterial/plant glucose-1-phosphate adenylyltransferase family. Homotetramer.

It catalyses the reaction alpha-D-glucose 1-phosphate + ATP + H(+) = ADP-alpha-D-glucose + diphosphate. It participates in glycan biosynthesis; glycogen biosynthesis. Its activity is regulated as follows. Allosterically activated by fructose-1,6-bisphosphate (F16BP) and inhibited by AMP. Functionally, involved in the biosynthesis of ADP-glucose, a building block required for the elongation reactions to produce glycogen. Catalyzes the reaction between ATP and alpha-D-glucose 1-phosphate (G1P) to produce pyrophosphate and ADP-Glc. In Shigella boydii serotype 18 (strain CDC 3083-94 / BS512), this protein is Glucose-1-phosphate adenylyltransferase.